Consider the following 347-residue polypeptide: Phenylalanine--tRNA ligase alpha subunit (347 aa).

E265 is a binding site for Mg(2+).

It belongs to the class-II aminoacyl-tRNA synthetase family. Phe-tRNA synthetase alpha subunit type 1 subfamily. As to quaternary structure, tetramer of two alpha and two beta subunits. The cofactor is Mg(2+).

Its subcellular location is the cytoplasm. The enzyme catalyses tRNA(Phe) + L-phenylalanine + ATP = L-phenylalanyl-tRNA(Phe) + AMP + diphosphate + H(+). The chain is Phenylalanine--tRNA ligase alpha subunit from Wolbachia sp. subsp. Brugia malayi (strain TRS).